The primary structure comprises 345 residues: Ubiquitin-associated domain-containing protein 2 (345 aa).

Residues Met-1 to Lys-39 form the signal peptide. Over Phe-40–Lys-91 the chain is Extracellular. The chain crosses the membrane as a helical span at residues Phe-92–Glu-112. Over Ala-113–Asn-125 the chain is Cytoplasmic. The helical transmembrane segment at Leu-126 to Pro-146 threads the bilayer. Residues Arg-147 to Thr-163 lie on the Extracellular side of the membrane. The N-linked (GlcNAc...) asparagine glycan is linked to Asn-161. The chain crosses the membrane as a helical span at residues Leu-164 to Met-184. Residues Ser-185–His-345 are Cytoplasmic-facing. The segment at Asn-287–Val-306 is disordered. A UBA domain is found at Glu-305–His-345.

In terms of assembly, interacts with LMBR1L, FAF2, AMFR and VCP.

It is found in the endoplasmic reticulum membrane. Restricts trafficking of FAF2 from the endoplasmic reticulum to lipid droplets. In association with LMBR1L and E3 ubiquitin-protein ligase AMFR, negatively regulates the canonical Wnt signaling pathway in the lymphocytes by promoting the ubiquitin-mediated degradation of CTNNB1 and Wnt receptors FZD6 and LRP6. This chain is Ubiquitin-associated domain-containing protein 2 (Ubac2), found in Mus musculus (Mouse).